We begin with the raw amino-acid sequence, 893 residues long: TBC domain-containing protein kinase-like protein (893 aa).

The 273-residue stretch at 1-273 (MFPLKDAEMG…PDELMKDQVF (273 aa)) folds into the Protein kinase domain. A Rab-GAP TBC domain is found at 466 to 651 (DIPPLMRGLT…HLWDTLLLGN (186 aa)).

Belongs to the protein kinase superfamily. In terms of assembly, component of the FERRY complex composed of five subunits, TBCK, PPP1R21, FERRY3, CRYZL1 and GATD1 with a ratio of 1:2:1:2:4, respectively.

The protein resides in the cytoplasm. It localises to the cytoskeleton. The protein localises to the spindle. Its subcellular location is the midbody. It is found in the early endosome. Its function is as follows. Component of the FERRY complex (Five-subunit Endosomal Rab5 and RNA/ribosome intermediary). The FERRY complex directly interacts with mRNAs and RAB5A, and functions as a RAB5A effector involved in the localization and the distribution of specific mRNAs most likely by mediating their endosomal transport. The complex recruits mRNAs and ribosomes to early endosomes through direct mRNA-interaction. Also involved in the modulation of mTOR signaling and expression of mTOR complex components. Involved in the control of actin-cytoskeleton organization. The chain is TBC domain-containing protein kinase-like protein (Tbck) from Mus musculus (Mouse).